The chain runs to 363 residues: UDP-N-acetylglucosamine--N-acetylmuramyl-(pentapeptide) pyrophosphoryl-undecaprenol N-acetylglucosamine transferase (363 aa).

Residues 14–16 (TGG), asparagine 122, arginine 163, serine 190, and glutamine 285 contribute to the UDP-N-acetyl-alpha-D-glucosamine site.

It belongs to the glycosyltransferase 28 family. MurG subfamily.

Its subcellular location is the cell inner membrane. It catalyses the reaction di-trans,octa-cis-undecaprenyl diphospho-N-acetyl-alpha-D-muramoyl-L-alanyl-D-glutamyl-meso-2,6-diaminopimeloyl-D-alanyl-D-alanine + UDP-N-acetyl-alpha-D-glucosamine = di-trans,octa-cis-undecaprenyl diphospho-[N-acetyl-alpha-D-glucosaminyl-(1-&gt;4)]-N-acetyl-alpha-D-muramoyl-L-alanyl-D-glutamyl-meso-2,6-diaminopimeloyl-D-alanyl-D-alanine + UDP + H(+). The protein operates within cell wall biogenesis; peptidoglycan biosynthesis. In terms of biological role, cell wall formation. Catalyzes the transfer of a GlcNAc subunit on undecaprenyl-pyrophosphoryl-MurNAc-pentapeptide (lipid intermediate I) to form undecaprenyl-pyrophosphoryl-MurNAc-(pentapeptide)GlcNAc (lipid intermediate II). This chain is UDP-N-acetylglucosamine--N-acetylmuramyl-(pentapeptide) pyrophosphoryl-undecaprenol N-acetylglucosamine transferase, found in Prochlorococcus marinus (strain MIT 9312).